The sequence spans 339 residues: Dihydroorotate dehydrogenase (quinone) (339 aa).

FMN contacts are provided by residues 64-68 and Thr-88; that span reads AGADK. Lys-68 serves as a coordination point for substrate. 113 to 117 is a substrate binding site; it reads NRNGF. Residues Asn-141 and Asn-174 each coordinate FMN. Asn-174 serves as a coordination point for substrate. Ser-177 (nucleophile) is an active-site residue. Position 179 (Asn-179) interacts with substrate. Residues Lys-219 and Thr-247 each coordinate FMN. A substrate-binding site is contributed by 248–249; the sequence is NT. FMN-binding positions include Gly-270, Gly-299, and 320-321; that span reads YS.

It belongs to the dihydroorotate dehydrogenase family. Type 2 subfamily. As to quaternary structure, monomer. It depends on FMN as a cofactor.

The protein resides in the cell membrane. The catalysed reaction is (S)-dihydroorotate + a quinone = orotate + a quinol. It functions in the pathway pyrimidine metabolism; UMP biosynthesis via de novo pathway; orotate from (S)-dihydroorotate (quinone route): step 1/1. Functionally, catalyzes the conversion of dihydroorotate to orotate with quinone as electron acceptor. This Haemophilus influenzae (strain PittGG) protein is Dihydroorotate dehydrogenase (quinone).